We begin with the raw amino-acid sequence, 270 residues long: Putative phosphoenolpyruvate synthase regulatory protein (270 aa).

150 to 157 (GVSRCGKT) contributes to the ADP binding site.

The protein belongs to the pyruvate, phosphate/water dikinase regulatory protein family. PSRP subfamily.

It carries out the reaction [pyruvate, water dikinase] + ADP = [pyruvate, water dikinase]-phosphate + AMP + H(+). The enzyme catalyses [pyruvate, water dikinase]-phosphate + phosphate + H(+) = [pyruvate, water dikinase] + diphosphate. In terms of biological role, bifunctional serine/threonine kinase and phosphorylase involved in the regulation of the phosphoenolpyruvate synthase (PEPS) by catalyzing its phosphorylation/dephosphorylation. This is Putative phosphoenolpyruvate synthase regulatory protein from Shewanella sp. (strain ANA-3).